The chain runs to 499 residues: uncharacterized protein (499 aa).

Helical transmembrane passes span 5–25 (FLLVLIPVLILYFYNLGYNAV), 79–99 (LGLRFFHALLGVFTGVLTYLL), 110–130 (ALLSFLILSLSFIFIANARYA), 132–152 (PEVPFTFFITLSLYLWYEYFT), 170–190 (VLTKGPAGFVLPAGVVFFYLL), 203–223 (YAGTLMVFLLSGWWFLYQYLV), 252–272 (ALDINVSFLPYSFLFFFALFW), 286–306 (VWFSFIFLIFSIVKMKIPVYI), 332–352 (LSLIFLWTVLVLATLALSLYF), 354–374 (FSATLFPLIPLLLLPFFLKKY), and 377–397 (LPAFGAFAFLFYLSSVILPYV).

Belongs to the glycosyltransferase 39 family.

It is found in the cell membrane. This is an uncharacterized protein from Aquifex aeolicus (strain VF5).